The chain runs to 312 residues: uncharacterized protein (312 aa).

Residues 1 to 28 form the signal peptide; it reads MNSADTQEPKSFNHTDMWTAFGTTMSGA.

In terms of biological role, the FAS-operon encodes genes involved in cytokinin production and in host plant fasciation (leafy gall). This is an uncharacterized protein from Rhodococcoides fascians (Rhodococcus fascians).